The following is a 251-amino-acid chain: 1-(5-phosphoribosyl)-5-[(5-phosphoribosylamino)methylideneamino] imidazole-4-carboxamide isomerase (251 aa).

Asp-8 acts as the Proton acceptor in catalysis. Asp-131 serves as the catalytic Proton donor.

It belongs to the HisA/HisF family.

Its subcellular location is the cytoplasm. The catalysed reaction is 1-(5-phospho-beta-D-ribosyl)-5-[(5-phospho-beta-D-ribosylamino)methylideneamino]imidazole-4-carboxamide = 5-[(5-phospho-1-deoxy-D-ribulos-1-ylimino)methylamino]-1-(5-phospho-beta-D-ribosyl)imidazole-4-carboxamide. Its pathway is amino-acid biosynthesis; L-histidine biosynthesis; L-histidine from 5-phospho-alpha-D-ribose 1-diphosphate: step 4/9. The chain is 1-(5-phosphoribosyl)-5-[(5-phosphoribosylamino)methylideneamino] imidazole-4-carboxamide isomerase from Burkholderia pseudomallei (strain 1710b).